A 64-amino-acid polypeptide reads, in one-letter code: Large ribosomal subunit protein bL33 (64 aa).

Belongs to the bacterial ribosomal protein bL33 family.

This chain is Large ribosomal subunit protein bL33, found in Synechococcus sp. (strain JA-2-3B'a(2-13)) (Cyanobacteria bacterium Yellowstone B-Prime).